Reading from the N-terminus, the 451-residue chain is Exodeoxyribonuclease 7 large subunit (451 aa).

It belongs to the XseA family. Heterooligomer composed of large and small subunits.

It is found in the cytoplasm. The catalysed reaction is Exonucleolytic cleavage in either 5'- to 3'- or 3'- to 5'-direction to yield nucleoside 5'-phosphates.. Functionally, bidirectionally degrades single-stranded DNA into large acid-insoluble oligonucleotides, which are then degraded further into small acid-soluble oligonucleotides. In Neisseria meningitidis serogroup B (strain ATCC BAA-335 / MC58), this protein is Exodeoxyribonuclease 7 large subunit.